Consider the following 390-residue polypeptide: Ribosomal RNA large subunit methyltransferase G (390 aa).

Belongs to the methyltransferase superfamily. RlmG family.

The protein resides in the cytoplasm. It catalyses the reaction guanosine(1835) in 23S rRNA + S-adenosyl-L-methionine = N(2)-methylguanosine(1835) in 23S rRNA + S-adenosyl-L-homocysteine + H(+). Specifically methylates the guanine in position 1835 (m2G1835) of 23S rRNA. This Alcanivorax borkumensis (strain ATCC 700651 / DSM 11573 / NCIMB 13689 / SK2) protein is Ribosomal RNA large subunit methyltransferase G.